The sequence spans 415 residues: Hydroxysteroid dehydrogenase-like protein 2 (415 aa).

NADP(+) is bound by residues 17-23, K42, and D74; that span reads GASRGIG. Residue Y168 is the Proton acceptor of the active site. K172 lines the NADP(+) pocket. An SCP2 domain is found at 304 to 412; sequence AGPVSEMFNT…KLEKMMAMMK (109 aa).

Belongs to the short-chain dehydrogenases/reductases (SDR) family.

It is found in the peroxisome. The protein localises to the mitochondrion. Its function is as follows. Has apparently no steroid dehydrogenase activity. Might act as a metabolic regulator that affects systemic adaptation to nutritional cues. This is Hydroxysteroid dehydrogenase-like protein 2 (hsdl2) from Danio rerio (Zebrafish).